Reading from the N-terminus, the 555-residue chain is Connector enhancer of kinase suppressor of ras 3 (555 aa).

Residues 7–72 (WSPKQVVDWT…LEAVDLLCAL (66 aa)) form the SAM domain. In terms of domain architecture, CRIC spans 80–174 (NMKNLVLKLR…TTVQKDCFVA (95 aa)). The PDZ domain occupies 211 to 293 (EVHLPNIKPG…GVVLLLKKRP (83 aa)). Disordered stretches follow at residues 309 to 334 (WKPP…DTSL), 347 to 390 (PPPP…FLDQ), and 517 to 537 (IPFQ…KSSS). A DUF1170 domain is found at 325-546 (SPESTMDTSL…STEPSLLVSW (222 aa)). Phosphoserine is present on residues serine 381 and serine 383.

The protein belongs to the CNKSR family. In terms of assembly, interacts with epithelial sodium channel ENaC. Interacts directly with SCNN1A (ENaC subunit alpha) and SCNN1B (ENaC subunit beta) C-terminal tails. Interacts with ENaC regulatory proteins NEDD4L, RAF1 and SGK1.

The protein resides in the cytoplasm. It is found in the apical cell membrane. Involved in transepithelial sodium transport. Regulates aldosterone-induced and epithelial sodium channel (ENaC)-mediated sodium transport through regulation of ENaC cell surface expression. Acts as a scaffold protein coordinating the assembly of an ENaC-regulatory complex (ERC). The chain is Connector enhancer of kinase suppressor of ras 3 (CNKSR3) from Homo sapiens (Human).